The following is a 244-amino-acid chain: ATP synthase subunit 4, mitochondrial (244 aa).

A mitochondrion-targeting transit peptide spans 1–35 (MSMSMGVRGLALRSVSKTLFSQGVRCPSMVIGARY). Residue Ser-144 is modified to Phosphoserine.

Belongs to the eukaryotic ATPase B chain family. As to quaternary structure, F-type ATPases have 2 components, CF(1) - the catalytic core - and CF(0) - the membrane proton channel. In yeast, the dimeric form of ATP synthase consists of 17 polypeptides: alpha, beta, gamma, delta, epsilon, 4 (B), 5 (OSCP), 6 (A), 8, 9 (C), d, E (Tim11), f, g, h, i/j and k.

The protein localises to the mitochondrion. The protein resides in the mitochondrion inner membrane. Mitochondrial membrane ATP synthase (F(1)F(0) ATP synthase or Complex V) produces ATP from ADP in the presence of a proton gradient across the membrane which is generated by electron transport complexes of the respiratory chain. F-type ATPases consist of two structural domains, F(1) - containing the extramembraneous catalytic core, and F(0) - containing the membrane proton channel, linked together by a central stalk and a peripheral stalk. During catalysis, ATP synthesis in the catalytic domain of F(1) is coupled via a rotary mechanism of the central stalk subunits to proton translocation. Part of the complex F(0) domain and the peripheric stalk, which acts as a stator to hold the catalytic alpha(3)beta(3) subcomplex and subunit a/ATP6 static relative to the rotary elements. The polypeptide is ATP synthase subunit 4, mitochondrial (ATP4) (Saccharomyces cerevisiae (strain ATCC 204508 / S288c) (Baker's yeast)).